The sequence spans 486 residues: Arginine deiminase (486 aa).

Catalysis depends on Cys-476, which acts as the Amidino-cysteine intermediate.

It belongs to the arginine deiminase family.

It localises to the cytoplasm. The catalysed reaction is L-arginine + H2O = L-citrulline + NH4(+). Its pathway is amino-acid degradation; L-arginine degradation via ADI pathway; carbamoyl phosphate from L-arginine: step 1/2. Involved in the arginine deiminase pathway of fermentative arginine utilization. In Halobacterium salinarum (strain ATCC 29341 / DSM 671 / R1), this protein is Arginine deiminase (arcA).